A 620-amino-acid polypeptide reads, in one-letter code: MYEWKLNEIVDSGVCARCGTCTIVCPNGILTFDERPKLIDECLRKGHGMCFEVCPRVSSAKYQIKIREKFYEKYYYAKSDIEGQDGGVVTAFLKYLLENGKIDGAIVVGDECWKPVSLVVQNAEDLLKTAKSKYAISTLDALRKAGEMGLEKVAVVGLPCQINGLRKLQYFPYHAKHDLELGRNGKPVKLPKIEYLIGLFCTEKFRYDNMKEVLSKHGIDIEKVEKFDIKKGKLLVYVNGEKKEFDLKEFEICSGCKMCRDFDAEMADVSVGCVGSPDGYSTIIIRTEKGEEIKNAVELKEGVNLEEIEKLRQLKLKRFKKEVERRRENNEYVSFYWTADYGGIGKRADGTYFIRVRAKPGGWYKPEEIKEILDIAEEYNAKIKVTDRAGYELHGISGFDVEDIVLRLREKGLLTGSEGPLVRATLACPGGGNCSSGLVDTTELARIIEDNFKERPAPYKFKIAISGCPNGCVRPQVHDIGIAGVKYPKVNEEKCNGCGRCAEVCKVEAIDIRGETSYTNYNVCVGCGKCIKNCPNEAREVKEEGYLVYVGGKTGREVVEGVKMKLMSVDEIINFIDKVLVVYGKYAEKPQRERLAAVMKRVGYGKFLEEVKELMKKEIC.

The region spanning L6 to R35 is the 4Fe-4S ferredoxin-type 1 domain. Residues C15, C18, C21, C25, C428, C434, C468, C472, C495, C498, C501, C505, C524, C527, C530, and C534 each contribute to the [4Fe-4S] cluster site. C472 is a siroheme binding site. 2 4Fe-4S ferredoxin-type domains span residues K486 to E515 and N520 to E544.

Belongs to the nitrite and sulfite reductase 4Fe-4S domain family. The cofactor is [4Fe-4S] cluster. Requires siroheme as cofactor.

It catalyses the reaction 3 oxidized coenzyme F420-(gamma-L-Glu)(n) + hydrogen sulfide + 3 H2O + 2 H(+) = 3 reduced coenzyme F420-(gamma-L-Glu)(n) + sulfite. In terms of biological role, catalyzes the reduction of sulfite to sulfide using reduced F420 as the electron source. Involved in sulfite detoxification and assimilation. Cannot use NADH or NADPH. In Methanocaldococcus jannaschii (strain ATCC 43067 / DSM 2661 / JAL-1 / JCM 10045 / NBRC 100440) (Methanococcus jannaschii), this protein is Coenzyme F420-dependent sulfite reductase.